The chain runs to 625 residues: Mitochondrial Rho GTPase 1 (625 aa).

At 1 to 601 the chain is on the cytoplasmic side; sequence MSDDETLADV…LRRVFYLNDS (601 aa). The 168-residue stretch at 3 to 170 folds into the Miro 1 domain; the sequence is DDETLADVRI…EIFYYAQKAV (168 aa). Residues 16 to 23, 62 to 66, and 123 to 126 each bind GTP; these read GDEGCGKT, DLSIK, and NKSD. EF-hand domains are found at residues 188–223 and 308–343; these read RARK…CFGI and EGVQ…CPVP. Residues aspartate 201, aspartate 203, aspartate 205, tyrosine 207, glutamate 212, aspartate 321, aspartate 323, aspartate 325, cysteine 327, and glutamate 332 each contribute to the Ca(2+) site. The Miro 2 domain occupies 420–625; sequence HGTDRKVFQC…LAGFLVLKNL (206 aa). GTP contacts are provided by residues 433–440, 470–474, and 537–540; these read GAKDAGKT, RVKEE, and TKVE. Residues 602–622 traverse the membrane as a helical; Anchor for type IV membrane protein segment; the sequence is NLLSKITFGAAIVALAGFLVL. Topologically, residues 623–625 are mitochondrial intermembrane; that stretch reads KNL.

The protein belongs to the mitochondrial Rho GTPase family.

Its subcellular location is the mitochondrion outer membrane. Mitochondrial GTPase involved in mitochondrial trafficking. Probably involved in control of anterograde transport of mitochondria and their subcellular distribution. Plays a role in maintaining mitochondrial morphology. This is Mitochondrial Rho GTPase 1 from Caenorhabditis elegans.